Here is a 320-residue protein sequence, read N- to C-terminus: Aspartate carbamoyltransferase catalytic subunit (320 aa).

Residues arginine 70 and threonine 71 each contribute to the carbamoyl phosphate site. Lysine 98 lines the L-aspartate pocket. 3 residues coordinate carbamoyl phosphate: arginine 120, histidine 149, and glutamine 152. The L-aspartate site is built by arginine 182 and arginine 237. 2 residues coordinate carbamoyl phosphate: glycine 278 and proline 279.

The protein belongs to the aspartate/ornithine carbamoyltransferase superfamily. ATCase family. Heterododecamer (2C3:3R2) of six catalytic PyrB chains organized as two trimers (C3), and six regulatory PyrI chains organized as three dimers (R2).

It carries out the reaction carbamoyl phosphate + L-aspartate = N-carbamoyl-L-aspartate + phosphate + H(+). Its pathway is pyrimidine metabolism; UMP biosynthesis via de novo pathway; (S)-dihydroorotate from bicarbonate: step 2/3. Functionally, catalyzes the condensation of carbamoyl phosphate and aspartate to form carbamoyl aspartate and inorganic phosphate, the committed step in the de novo pyrimidine nucleotide biosynthesis pathway. The protein is Aspartate carbamoyltransferase catalytic subunit of Vesicomyosocius okutanii subsp. Calyptogena okutanii (strain HA).